A 393-amino-acid chain; its full sequence is METFLFTSESVNEGHPDKLCDQISDAVLDACLEQDQDSKVACETCTKTNMVMVFGEITTKAAVDYEKIVRDTCRTIGFVSDDVGLDADNCKVLVNIEQQSPDIAQGVHGHLTKRPEEIGAGDQGHMFGYATDETSELMPLSHVLATKLGARLTEVRKNGTCPWLRPDGKTQVTVEYYNEKGATVPIRVHTLLISTQHDETVTNDEIAADLKEHVIKPVIPDKYLDEKTIFHLNPSGRFVIGGPHGDAGLTGRKIIIDTYGGWGAHGGGAFSGKDPTKVDRSGAYIVRQAAKSIVANGLARRCIVQVSYAIGVPEPLSVFVDTYGTGKIPDKEILKIVKESFDFRPGMIAINLDLKRGGNSRFLKTAAYGHFGRDDPDFTWESGEAPQVGQTSS.

E9 provides a ligand contact to Mg(2+). H15 serves as a coordination point for ATP. E43 contributes to the K(+) binding site. L-methionine-binding residues include E56 and Q99. ATP contacts are provided by residues 167 to 169, 235 to 238, D246, 252 to 253, A269, K273, and K277; these read DGK, SGRF, and RK. D246 lines the L-methionine pocket. K277 serves as a coordination point for L-methionine.

It belongs to the AdoMet synthase family. Homotetramer. Requires Mn(2+) as cofactor. Mg(2+) is required as a cofactor. It depends on Co(2+) as a cofactor. The cofactor is K(+).

The protein localises to the cytoplasm. It catalyses the reaction L-methionine + ATP + H2O = S-adenosyl-L-methionine + phosphate + diphosphate. It participates in amino-acid biosynthesis; S-adenosyl-L-methionine biosynthesis; S-adenosyl-L-methionine from L-methionine: step 1/1. Functionally, catalyzes the formation of S-adenosylmethionine from methionine and ATP. The reaction comprises two steps that are both catalyzed by the same enzyme: formation of S-adenosylmethionine (AdoMet) and triphosphate, and subsequent hydrolysis of the triphosphate. The polypeptide is S-adenosylmethionine synthase (SAM) (Camellia sinensis (Tea plant)).